The primary structure comprises 315 residues: Ribosomal RNA small subunit methyltransferase H (315 aa).

Residues G37–H39, D57, F83, D105, and Q112 each bind S-adenosyl-L-methionine.

Belongs to the methyltransferase superfamily. RsmH family.

It is found in the cytoplasm. The enzyme catalyses cytidine(1402) in 16S rRNA + S-adenosyl-L-methionine = N(4)-methylcytidine(1402) in 16S rRNA + S-adenosyl-L-homocysteine + H(+). Its function is as follows. Specifically methylates the N4 position of cytidine in position 1402 (C1402) of 16S rRNA. This is Ribosomal RNA small subunit methyltransferase H from Pseudomonas putida (strain W619).